The primary structure comprises 474 residues: Siroheme synthase (474 aa).

A precorrin-2 dehydrogenase /sirohydrochlorin ferrochelatase region spans residues 1–203; that stretch reads MDYLPIFLKL…GRAEDAERVL (203 aa). NAD(+)-binding positions include 22-23 and 43-44; these read EV and AS. A uroporphyrinogen-III C-methyltransferase region spans residues 219–474; sequence GSVALVGAGP…QETEGRSGNG (256 aa). P228 contributes to the S-adenosyl-L-methionine binding site. Catalysis depends on D251, which acts as the Proton acceptor. Catalysis depends on K273, which acts as the Proton donor. S-adenosyl-L-methionine contacts are provided by residues 304–306, I309, 334–335, M387, and G416; these read GGD and TA.

The protein in the N-terminal section; belongs to the precorrin-2 dehydrogenase / sirohydrochlorin ferrochelatase family. It in the C-terminal section; belongs to the precorrin methyltransferase family.

The catalysed reaction is uroporphyrinogen III + 2 S-adenosyl-L-methionine = precorrin-2 + 2 S-adenosyl-L-homocysteine + H(+). It carries out the reaction precorrin-2 + NAD(+) = sirohydrochlorin + NADH + 2 H(+). The enzyme catalyses siroheme + 2 H(+) = sirohydrochlorin + Fe(2+). The protein operates within cofactor biosynthesis; adenosylcobalamin biosynthesis; precorrin-2 from uroporphyrinogen III: step 1/1. It functions in the pathway cofactor biosynthesis; adenosylcobalamin biosynthesis; sirohydrochlorin from precorrin-2: step 1/1. It participates in porphyrin-containing compound metabolism; siroheme biosynthesis; precorrin-2 from uroporphyrinogen III: step 1/1. Its pathway is porphyrin-containing compound metabolism; siroheme biosynthesis; siroheme from sirohydrochlorin: step 1/1. The protein operates within porphyrin-containing compound metabolism; siroheme biosynthesis; sirohydrochlorin from precorrin-2: step 1/1. Functionally, multifunctional enzyme that catalyzes the SAM-dependent methylations of uroporphyrinogen III at position C-2 and C-7 to form precorrin-2 via precorrin-1. Then it catalyzes the NAD-dependent ring dehydrogenation of precorrin-2 to yield sirohydrochlorin. Finally, it catalyzes the ferrochelation of sirohydrochlorin to yield siroheme. In Methylococcus capsulatus (strain ATCC 33009 / NCIMB 11132 / Bath), this protein is Siroheme synthase.